The chain runs to 261 residues: Imidazole glycerol phosphate synthase subunit HisF (261 aa).

Active-site residues include Asp16 and Asp135.

It belongs to the HisA/HisF family. As to quaternary structure, heterodimer of HisH and HisF.

The protein resides in the cytoplasm. The catalysed reaction is 5-[(5-phospho-1-deoxy-D-ribulos-1-ylimino)methylamino]-1-(5-phospho-beta-D-ribosyl)imidazole-4-carboxamide + L-glutamine = D-erythro-1-(imidazol-4-yl)glycerol 3-phosphate + 5-amino-1-(5-phospho-beta-D-ribosyl)imidazole-4-carboxamide + L-glutamate + H(+). It participates in amino-acid biosynthesis; L-histidine biosynthesis; L-histidine from 5-phospho-alpha-D-ribose 1-diphosphate: step 5/9. IGPS catalyzes the conversion of PRFAR and glutamine to IGP, AICAR and glutamate. The HisF subunit catalyzes the cyclization activity that produces IGP and AICAR from PRFAR using the ammonia provided by the HisH subunit. In Mycobacterium sp. (strain JLS), this protein is Imidazole glycerol phosphate synthase subunit HisF.